We begin with the raw amino-acid sequence, 548 residues long: Malate:quinone oxidoreductase (548 aa).

The segment at 521–548 is disordered; it reads DKPQAADSTPKPQLKPQPVQKEVADIAL. Over residues 530–541 the composition is skewed to low complexity; it reads PKPQLKPQPVQK.

This sequence belongs to the MQO family. It depends on FAD as a cofactor.

It catalyses the reaction (S)-malate + a quinone = a quinol + oxaloacetate. It functions in the pathway carbohydrate metabolism; tricarboxylic acid cycle; oxaloacetate from (S)-malate (quinone route): step 1/1. The chain is Malate:quinone oxidoreductase (mqo) from Escherichia coli (strain K12).